A 366-amino-acid polypeptide reads, in one-letter code: tRNA (guanine(26)-N(2))-dimethyltransferase (366 aa).

The tract at residues 1 to 28 is disordered; it reads MEVSEGSVTVEVPEERHGASEGSGEGVF. One can recognise a Trm1 methyltransferase domain in the interval 1–365; that stretch reads MEVSEGSVTV…ADVADIRNAV (365 aa). The S-adenosyl-L-methionine site is built by R37, R64, and D79. Residues C234, C237, C254, and C257 each contribute to the Zn(2+) site.

Belongs to the class I-like SAM-binding methyltransferase superfamily. Trm1 family.

The catalysed reaction is guanosine(26) in tRNA + 2 S-adenosyl-L-methionine = N(2)-dimethylguanosine(26) in tRNA + 2 S-adenosyl-L-homocysteine + 2 H(+). Dimethylates a single guanine residue at position 26 of a number of tRNAs using S-adenosyl-L-methionine as donor of the methyl groups. The protein is tRNA (guanine(26)-N(2))-dimethyltransferase of Natronomonas pharaonis (strain ATCC 35678 / DSM 2160 / CIP 103997 / JCM 8858 / NBRC 14720 / NCIMB 2260 / Gabara) (Halobacterium pharaonis).